A 472-amino-acid polypeptide reads, in one-letter code: Glycosyl hydrolase family 109 protein (472 aa).

The segment at residues 1–35 (MSQTPAVSRRLLLGSAAATGALATGIGSAAPVAAA) is a signal peptide (tat-type signal). NAD(+)-binding positions include 68 to 69 (NR), D90, 139 to 142 (WEFH), H145, 159 to 160 (EL), and N188. Substrate-binding positions include Y217, R236, 248 to 251 (YPMH), and Y330. Y248 lines the NAD(+) pocket.

Belongs to the Gfo/Idh/MocA family. Glycosyl hydrolase 109 subfamily. The cofactor is NAD(+). Post-translationally, predicted to be exported by the Tat system. The position of the signal peptide cleavage has not been experimentally proven.

Functionally, glycosidase. Has no alpha-N-acetylgalactosaminidase activity. The chain is Glycosyl hydrolase family 109 protein from Streptomyces coelicolor (strain ATCC BAA-471 / A3(2) / M145).